The primary structure comprises 709 residues: MTEDLDAWRKLAEKELKGKSPDSLTWNTLEGIPVKPLYTRADLAGMEHLDGLPGVAPFTRGVRATMYAGRPWTIRQYAGFSTAEASNAFYRKALAAGQQGVSVAFDLATHRGYDSDHPRVVGDVGKAGVAIDSIEDMKILFNGIPLEKISVSMTMNGAVIPILANFIVTGEEQGVPRAALSGTIQNDILKEFMVRNTYIYPPEPSMRIIADIIEYTSKEMPKFNSISISGYHMQEAGANLVQELAYTLADGREYVRAALARGMNVDDFAGRLSFFFAIGMNFFMEAAKLRAARLLWHRIMSEFAPKKPGSLMLRTHCQTSGVSLQEQDPYNNVIRTAYEAMSAALGGTQSLHTNALDEAIALPTEFSARIARNTQIILQEETGVTRVVDPLAGSYYVESLTAELAEKAWALIEEVEAMGGMTKAVASGMPKLRIEESAARRQAAIDRGEDVIVGVNKYRLAKEDPIEILDIDNVAVRDAQIARLEKMRATRDEAACQAALDELTRRAAEGGNLLEAAVDASRARASVGEISMAMEKVFGRHRAEVKTLSGVYGAAYEGDDGFAQIQRDVESFAEEEGRRPRMLVVKMGQDGHDRGAKVIATAFADIGFDVDVGTLFQTPEEAAQDAIDNDVHVVGISSLAAGHKTLAPKLIEALKEKGAGEILVICGGVIPQQDYDFLQQAGVKAIFGPGTNIPSAAKHILDLIREARS.

Residues 73-77, 183-185, Arg195, Lys222, His232, and 271-273 contribute to the substrate site; these read TIRQY, TIQ, and RLS. In terms of domain architecture, B12-binding spans 579 to 709; the sequence is RPRMLVVKMG…ILDLIREARS (131 aa). His592 contributes to the adenosylcob(III)alamin binding site.

This sequence belongs to the methylmalonyl-CoA mutase family. Homodimer. It depends on adenosylcob(III)alamin as a cofactor.

The catalysed reaction is (R)-methylmalonyl-CoA = succinyl-CoA. Its pathway is metabolic intermediate metabolism; propanoyl-CoA degradation; succinyl-CoA from propanoyl-CoA: step 3/3. Functionally, radical enzyme that catalyzes the transformation of (2R)-methylmalonyl-CoA to succinyl-CoA. Is involved in the ethylmalonyl-CoA pathway for acetyl-CoA assimilation required for R.sphaeroides growth on acetate as sole carbon source. The chain is Methylmalonyl-CoA mutase from Cereibacter sphaeroides (strain ATCC 17023 / DSM 158 / JCM 6121 / CCUG 31486 / LMG 2827 / NBRC 12203 / NCIMB 8253 / ATH 2.4.1.) (Rhodobacter sphaeroides).